The primary structure comprises 341 residues: Eukaryotic translation initiation factor 3 subunit I (341 aa).

WD repeat units follow at residues 8–49 (GHER…GTYH), 50–91 (GHQG…HTWE), 145–184 (CDES…QLHS), 189–228 (DMGS…VLKT), and 286–325 (GHFG…FDFM).

This sequence belongs to the eIF-3 subunit I family. In terms of assembly, component of the eukaryotic translation initiation factor 3 (eIF-3) complex.

It is found in the cytoplasm. Component of the eukaryotic translation initiation factor 3 (eIF-3) complex, which is involved in protein synthesis of a specialized repertoire of mRNAs and, together with other initiation factors, stimulates binding of mRNA and methionyl-tRNAi to the 40S ribosome. The eIF-3 complex specifically targets and initiates translation of a subset of mRNAs involved in cell proliferation. This is Eukaryotic translation initiation factor 3 subunit I from Pyricularia oryzae (strain 70-15 / ATCC MYA-4617 / FGSC 8958) (Rice blast fungus).